Reading from the N-terminus, the 695-residue chain is UvrABC system protein B (695 aa).

The Helicase ATP-binding domain maps to 25–176 (KSILEGHRFQ…NQREVLRDLA (152 aa)). An ATP-binding site is contributed by 38–45 (GATGTGKT). The Beta-hairpin signature appears at 91–114 (YYDYYQPEAYVPSTDTYIAKSSSI). The Helicase C-terminal domain occupies 454–617 (LLGEIYLRLE…ITPKPIIKKN (164 aa)). A UVR domain is found at 652–687 (PELIGQLELKMKAAAKNLEFEEAAQLRDQIKKLRQR).

Belongs to the UvrB family. In terms of assembly, forms a heterotetramer with UvrA during the search for lesions. Interacts with UvrC in an incision complex.

The protein localises to the cytoplasm. In terms of biological role, the UvrABC repair system catalyzes the recognition and processing of DNA lesions. A damage recognition complex composed of 2 UvrA and 2 UvrB subunits scans DNA for abnormalities. Upon binding of the UvrA(2)B(2) complex to a putative damaged site, the DNA wraps around one UvrB monomer. DNA wrap is dependent on ATP binding by UvrB and probably causes local melting of the DNA helix, facilitating insertion of UvrB beta-hairpin between the DNA strands. Then UvrB probes one DNA strand for the presence of a lesion. If a lesion is found the UvrA subunits dissociate and the UvrB-DNA preincision complex is formed. This complex is subsequently bound by UvrC and the second UvrB is released. If no lesion is found, the DNA wraps around the other UvrB subunit that will check the other stand for damage. This is UvrABC system protein B from Synechococcus sp. (strain JA-3-3Ab) (Cyanobacteria bacterium Yellowstone A-Prime).